Consider the following 248-residue polypeptide: MMKELLMNNMLNDVPTPWAMYFQDSATPNMEGIMELHNNVVFYLIIMLCFVTYMLYNISTVYNKSAVAYKYMNHGQFIEMVWTTFPAVMLLIMAFPSFMLLYICDEVMAPAMTIKAMGLQWYWKYEYSDFMDEKGETIEFESYIIPEDLLEDGQLRMLDVDASVVCPVDTHIRFIVTSADVIHDFCMPSLGIKIDAAPGRLNQTSALIQREGVYYGQCSELCGVMHSAMPIKIEVVPTADFLTWIDEQ.

Over 1-39 the chain is Mitochondrial intermembrane; the sequence is MMKELLMNNMLNDVPTPWAMYFQDSATPNMEGIMELHNN. The helical transmembrane segment at 40-56 threads the bilayer; the sequence is VVFYLIIMLCFVTYMLY. Residues 57–87 are Mitochondrial matrix-facing; the sequence is NISTVYNKSAVAYKYMNHGQFIEMVWTTFPA. Residues 88–104 form a helical membrane-spanning segment; it reads VMLLIMAFPSFMLLYIC. Topologically, residues 105-248 are mitochondrial intermembrane; it reads DEVMAPAMTI…ADFLTWIDEQ (144 aa). Residues His183, Cys218, Glu220, Cys222, His226, and Met229 each coordinate Cu cation. Glu220 is a Mg(2+) binding site.

Belongs to the cytochrome c oxidase subunit 2 family. In terms of assembly, component of the cytochrome c oxidase (complex IV, CIV), a multisubunit enzyme composed of a catalytic core of 3 subunits and several supernumerary subunits. The complex exists as a monomer or a dimer and forms supercomplexes (SCs) in the inner mitochondrial membrane with ubiquinol-cytochrome c oxidoreductase (cytochrome b-c1 complex, complex III, CIII). It depends on Cu cation as a cofactor.

It localises to the mitochondrion inner membrane. The catalysed reaction is 4 Fe(II)-[cytochrome c] + O2 + 8 H(+)(in) = 4 Fe(III)-[cytochrome c] + 2 H2O + 4 H(+)(out). Its function is as follows. Component of the cytochrome c oxidase, the last enzyme in the mitochondrial electron transport chain which drives oxidative phosphorylation. The respiratory chain contains 3 multisubunit complexes succinate dehydrogenase (complex II, CII), ubiquinol-cytochrome c oxidoreductase (cytochrome b-c1 complex, complex III, CIII) and cytochrome c oxidase (complex IV, CIV), that cooperate to transfer electrons derived from NADH and succinate to molecular oxygen, creating an electrochemical gradient over the inner membrane that drives transmembrane transport and the ATP synthase. Cytochrome c oxidase is the component of the respiratory chain that catalyzes the reduction of oxygen to water. Electrons originating from reduced cytochrome c in the intermembrane space (IMS) are transferred via the dinuclear copper A center (CU(A)) of subunit 2 and heme A of subunit 1 to the active site in subunit 1, a binuclear center (BNC) formed by heme A3 and copper B (CU(B)). The BNC reduces molecular oxygen to 2 water molecules using 4 electrons from cytochrome c in the IMS and 4 protons from the mitochondrial matrix. The sequence is that of Cytochrome c oxidase subunit 2 (COX2) from Brettanomyces naardenensis (Yeast).